Reading from the N-terminus, the 397-residue chain is 1-deoxy-D-xylulose 5-phosphate reductoisomerase (397 aa).

Residues Thr17, Gly18, Ser19, Ile20, Ala45, Asn47, and Asn130 each contribute to the NADPH site. A 1-deoxy-D-xylulose 5-phosphate-binding site is contributed by Lys131. Glu132 is an NADPH binding site. Asp156 contacts Mn(2+). Positions 157, 158, 182, and 205 each coordinate 1-deoxy-D-xylulose 5-phosphate. Mn(2+) is bound at residue Glu158. NADPH is bound at residue Gly211. 1-deoxy-D-xylulose 5-phosphate is bound by residues Ser218, Asn223, Lys224, and Glu227. A Mn(2+)-binding site is contributed by Glu227.

The protein belongs to the DXR family. Mg(2+) is required as a cofactor. Requires Mn(2+) as cofactor.

The enzyme catalyses 2-C-methyl-D-erythritol 4-phosphate + NADP(+) = 1-deoxy-D-xylulose 5-phosphate + NADPH + H(+). The protein operates within isoprenoid biosynthesis; isopentenyl diphosphate biosynthesis via DXP pathway; isopentenyl diphosphate from 1-deoxy-D-xylulose 5-phosphate: step 1/6. In terms of biological role, catalyzes the NADPH-dependent rearrangement and reduction of 1-deoxy-D-xylulose-5-phosphate (DXP) to 2-C-methyl-D-erythritol 4-phosphate (MEP). The protein is 1-deoxy-D-xylulose 5-phosphate reductoisomerase of Agrobacterium fabrum (strain C58 / ATCC 33970) (Agrobacterium tumefaciens (strain C58)).